A 243-amino-acid chain; its full sequence is Homeobox protein goosecoid isoform A (243 aa).

A DNA-binding region (homeobox) is located at residues 148–207 (KRRHRTIFTDEQLEALENLFQETKYPDVGTREQLARRVHLREEKVEVWFKNRRAKWRRQK). The segment at 201–243 (AKWRRQKRSSSEESENAQKWNKSSKNSAEKADEQVKSDLDSDS) is disordered. A compositionally biased stretch (polar residues) spans 217-226 (AQKWNKSSKN). Positions 227–243 (SAEKADEQVKSDLDSDS) are enriched in basic and acidic residues.

The protein belongs to the paired homeobox family. Bicoid subfamily. As to expression, at the start of gastrulation, it is found in a patch of cells encompassing 60 degrees of arc on the dorsal marginal zone.

The protein resides in the nucleus. In terms of biological role, plays a central role in executing Spemann's organizer phenomenon (the dorsal blastopore lip of the early Xenopus laevis gastrula can organize a complete secondary body axis when transplanted to another embryo). This is Homeobox protein goosecoid isoform A (gsc-a) from Xenopus laevis (African clawed frog).